A 416-amino-acid chain; its full sequence is Exodeoxyribonuclease 7 large subunit (416 aa).

This sequence belongs to the XseA family. In terms of assembly, heterooligomer composed of large and small subunits.

The protein localises to the cytoplasm. It catalyses the reaction Exonucleolytic cleavage in either 5'- to 3'- or 3'- to 5'-direction to yield nucleoside 5'-phosphates.. In terms of biological role, bidirectionally degrades single-stranded DNA into large acid-insoluble oligonucleotides, which are then degraded further into small acid-soluble oligonucleotides. The protein is Exodeoxyribonuclease 7 large subunit of Acidothermus cellulolyticus (strain ATCC 43068 / DSM 8971 / 11B).